The following is a 252-amino-acid chain: NAD-dependent protein deacetylase (252 aa).

One can recognise a Deacetylase sirtuin-type domain in the interval 2 to 243 (DSKRDEKILE…DRVVKELKKI (242 aa)). Residues alanine 28, threonine 32, phenylalanine 39, arginine 40, glutamine 109, isoleucine 111, aspartate 112, and histidine 127 each coordinate NAD(+). Residue phenylalanine 39 coordinates nicotinamide. The nicotinamide site is built by isoleucine 111 and aspartate 112. Histidine 127 acts as the Proton acceptor in catalysis. Positions 135, 138, 148, and 150 each coordinate Zn(2+). NAD(+) is bound by residues threonine 188, serine 189, and asparagine 211.

This sequence belongs to the sirtuin family. Class U subfamily. Requires Zn(2+) as cofactor.

The protein localises to the cytoplasm. The catalysed reaction is N(6)-acetyl-L-lysyl-[protein] + NAD(+) + H2O = 2''-O-acetyl-ADP-D-ribose + nicotinamide + L-lysyl-[protein]. Its function is as follows. NAD-dependent protein deacetylase which modulates the activities of several enzymes which are inactive in their acetylated form. The polypeptide is NAD-dependent protein deacetylase (Fusobacterium nucleatum subsp. nucleatum (strain ATCC 25586 / DSM 15643 / BCRC 10681 / CIP 101130 / JCM 8532 / KCTC 2640 / LMG 13131 / VPI 4355)).